The sequence spans 418 residues: Serine hydroxymethyltransferase (418 aa).

Residues L121 and 125–127 (GHL) each bind (6S)-5,6,7,8-tetrahydrofolate. N6-(pyridoxal phosphate)lysine is present on K230. 356-358 (SPF) serves as a coordination point for (6S)-5,6,7,8-tetrahydrofolate.

The protein belongs to the SHMT family. As to quaternary structure, homodimer. Pyridoxal 5'-phosphate is required as a cofactor.

The protein resides in the cytoplasm. The enzyme catalyses (6R)-5,10-methylene-5,6,7,8-tetrahydrofolate + glycine + H2O = (6S)-5,6,7,8-tetrahydrofolate + L-serine. It functions in the pathway one-carbon metabolism; tetrahydrofolate interconversion. The protein operates within amino-acid biosynthesis; glycine biosynthesis; glycine from L-serine: step 1/1. Functionally, catalyzes the reversible interconversion of serine and glycine with tetrahydrofolate (THF) serving as the one-carbon carrier. This reaction serves as the major source of one-carbon groups required for the biosynthesis of purines, thymidylate, methionine, and other important biomolecules. Also exhibits THF-independent aldolase activity toward beta-hydroxyamino acids, producing glycine and aldehydes, via a retro-aldol mechanism. The chain is Serine hydroxymethyltransferase from Alteromonas mediterranea (strain DSM 17117 / CIP 110805 / LMG 28347 / Deep ecotype).